The chain runs to 358 residues: Putative KilA-N domain-containing protein 313L (358 aa).

Residues 15–124 (NFYYGLFGDF…DKCNQIVIDF (110 aa)) enclose the KilA-N domain. Residues 126–245 (VVEFKEKEKE…VKLEISVEDR (120 aa)) adopt a coiled-coil conformation.

Belongs to the IIV-6 006L/238R/313L/468L family.

The polypeptide is Putative KilA-N domain-containing protein 313L (Acheta domesticus (House cricket)).